Consider the following 101-residue polypeptide: Small ribosomal subunit protein uS14 (101 aa).

Belongs to the universal ribosomal protein uS14 family. Part of the 30S ribosomal subunit. Contacts proteins S3 and S10.

Functionally, binds 16S rRNA, required for the assembly of 30S particles and may also be responsible for determining the conformation of the 16S rRNA at the A site. In Polaromonas naphthalenivorans (strain CJ2), this protein is Small ribosomal subunit protein uS14.